Consider the following 404-residue polypeptide: MQYSEIMIRYGELSTKKKNRMRFINKLKNNMEHVLSIYPDVSVKTDRDRGHVYLNGTDYHEVAESLKEIFGIQAFSPSFKVEKNVDTLVKAVQEIMTSVYKDGMTFKITAKRSDHSFELDSRALNHTLGDAVFSVLPNIKAQMKQPDINLKVEIRDEAAYISYENIRGAGGLPVGTSGKGMLMLSGGIDSPVAGYLALKRGVDIEAVHFASPPYTSPGALKKAHALTRKLTKFGGNIQFIEVPFTEIQEEIKEKAPEAYLMTLTRRFMMRITDRIRENRNGLVIINGESLGQVASQTLESMQAINAVTATPIIRPVVTMDKLEIIDIAQKIDTFDISIQPFEDCCTIFAPDRPKTNPKIKNTEQYEKRMDVEGLVERAVAGIMVTTIQPQADSDDVDDLIDDLL.

The region spanning 60–165 is the THUMP domain; that stretch reads HEVAESLKEI…DEAAYISYEN (106 aa). Residues 183–184, 208–209, Arg-265, Gly-287, and Gln-296 each bind ATP; these read ML and HF.

This sequence belongs to the ThiI family.

It is found in the cytoplasm. It carries out the reaction [ThiI sulfur-carrier protein]-S-sulfanyl-L-cysteine + a uridine in tRNA + 2 reduced [2Fe-2S]-[ferredoxin] + ATP + H(+) = [ThiI sulfur-carrier protein]-L-cysteine + a 4-thiouridine in tRNA + 2 oxidized [2Fe-2S]-[ferredoxin] + AMP + diphosphate. The enzyme catalyses [ThiS sulfur-carrier protein]-C-terminal Gly-Gly-AMP + S-sulfanyl-L-cysteinyl-[cysteine desulfurase] + AH2 = [ThiS sulfur-carrier protein]-C-terminal-Gly-aminoethanethioate + L-cysteinyl-[cysteine desulfurase] + A + AMP + 2 H(+). Its pathway is cofactor biosynthesis; thiamine diphosphate biosynthesis. Catalyzes the ATP-dependent transfer of a sulfur to tRNA to produce 4-thiouridine in position 8 of tRNAs, which functions as a near-UV photosensor. Also catalyzes the transfer of sulfur to the sulfur carrier protein ThiS, forming ThiS-thiocarboxylate. This is a step in the synthesis of thiazole, in the thiamine biosynthesis pathway. The sulfur is donated as persulfide by IscS. This is Probable tRNA sulfurtransferase from Streptococcus agalactiae serotype Ia (strain ATCC 27591 / A909 / CDC SS700).